A 522-amino-acid chain; its full sequence is Glutathione reductase, mitochondrial (522 aa).

The N-terminal 43 residues, 1 to 43 (MALLPRALSSGGRPSWRRAARASRGFPLPLPFPAAATHALSRA), are a transit peptide targeting the mitochondrion. 2 residues coordinate FAD: S74 and G75. Position 74 (S74) interacts with glutathione. R81 contacts glutathione. FAD is bound at residue E94. At K97 the chain carries N6-acetyllysine. 3 residues coordinate FAD: T101, C102, and K110. C102 and C107 are disulfide-bonded. Residue Y158 coordinates glutathione. Residue A174 participates in FAD binding. Residues A239, I242, E245, R262, R268, and G334 each coordinate NADP(+). D375 provides a ligand contact to FAD. Residue L381 coordinates NADP(+). T383 is a binding site for FAD. A glutathione-binding site is contributed by R391. V414 is a binding site for NADP(+). FAD is bound at residue H511. The Proton acceptor role is filled by H511.

Belongs to the class-I pyridine nucleotide-disulfide oxidoreductase family. As to quaternary structure, homodimer; disulfide-linked. The cofactor is FAD.

The protein localises to the mitochondrion. The protein resides in the cytoplasm. The enzyme catalyses 2 glutathione + NADP(+) = glutathione disulfide + NADPH + H(+). Its function is as follows. Catalyzes the reduction of glutathione disulfide (GSSG) to reduced glutathione (GSH). Constitutes the major mechanism to maintain a high GSH:GSSG ratio in the cytosol. The protein is Glutathione reductase, mitochondrial (GSR) of Callithrix jacchus (White-tufted-ear marmoset).